The sequence spans 632 residues: tRNA uridine 5-carboxymethylaminomethyl modification enzyme MnmG (632 aa).

FAD is bound by residues Gly-16–Gly-21, Val-128, and Ser-183. The segment at Pro-206–Lys-225 is disordered. Positions Ser-216–Lys-225 are enriched in basic and acidic residues. Residue Gly-277–Phe-291 coordinates NAD(+). Residue Gln-374 coordinates FAD.

Belongs to the MnmG family. In terms of assembly, homodimer. Heterotetramer of two MnmE and two MnmG subunits. Requires FAD as cofactor.

It localises to the cytoplasm. NAD-binding protein involved in the addition of a carboxymethylaminomethyl (cmnm) group at the wobble position (U34) of certain tRNAs, forming tRNA-cmnm(5)s(2)U34. In Lactobacillus acidophilus (strain ATCC 700396 / NCK56 / N2 / NCFM), this protein is tRNA uridine 5-carboxymethylaminomethyl modification enzyme MnmG.